Consider the following 434-residue polypeptide: Protein maelstrom homolog (434 aa).

A DNA-binding region (HMG box) is located at residues 4–73 (RKASRNAYYF…AQGKDSGPSE (70 aa)). Disordered stretches follow at residues 62 to 94 (RAAQGKDSGPSEKQKPVFTPLRKPGMLVPKQNV) and 357 to 385 (SHFNSANQEQRSNTPIGDYPSRAKISGQN). Residues 357–371 (SHFNSANQEQRSNTP) show a composition bias toward polar residues.

This sequence belongs to the maelstrom family. Interacts with SMARCB1, SIN3B and DDX4. Interacts with piRNA-associated proteins TDRD1, PIWIL1 and PIWIL2. Interacts with TEX19.

The protein resides in the cytoplasm. Its subcellular location is the nucleus. Plays a central role during spermatogenesis by repressing transposable elements and preventing their mobilization, which is essential for the germline integrity. Acts via the piRNA metabolic process, which mediates the repression of transposable elements during meiosis by forming complexes composed of piRNAs and Piwi proteins and governs the methylation and subsequent repression of transposons. Its association with piP-bodies suggests a participation in the secondary piRNAs metabolic process. Required for the localization of germ-cell factors to the meiotic nuage. This Macaca fascicularis (Crab-eating macaque) protein is Protein maelstrom homolog (MAEL).